The chain runs to 349 residues: Isopentenyl-diphosphate delta-isomerase (349 aa).

Residue 7–8 (RK) coordinates substrate. FMN-binding positions include Ser65, 66–68 (SMT), Ser96, and Asn124. 96 to 98 (SQR) serves as a coordination point for substrate. Gln159 lines the substrate pocket. Glu160 is a Mg(2+) binding site. FMN contacts are provided by residues Lys191, Thr221, 271–273 (GIR), and 292–293 (AA).

The protein belongs to the IPP isomerase type 2 family. Homooctamer. Dimer of tetramers. It depends on FMN as a cofactor. The cofactor is NADPH. Mg(2+) is required as a cofactor.

The protein resides in the cytoplasm. It catalyses the reaction isopentenyl diphosphate = dimethylallyl diphosphate. Its function is as follows. Involved in the biosynthesis of isoprenoids. Catalyzes the 1,3-allylic rearrangement of the homoallylic substrate isopentenyl (IPP) to its allylic isomer, dimethylallyl diphosphate (DMAPP). In Synechocystis sp. (strain ATCC 27184 / PCC 6803 / Kazusa), this protein is Isopentenyl-diphosphate delta-isomerase.